The following is a 205-amino-acid chain: Putative STAG3-like protein 1 (205 aa).

One can recognise an SCD domain in the interval 10 to 95; sequence PKVTCRDVLP…GRFKDWMVSM (86 aa).

Belongs to the SCC3 family.

It localises to the nucleus. In Homo sapiens (Human), this protein is Putative STAG3-like protein 1 (STAG3L1).